The sequence spans 339 residues: Protein-lysine N-methyltransferase EFM3 (339 aa).

S-adenosyl-L-methionine contacts are provided by residues Trp137 and 174 to 176 (GAG). Thr177 bears the Phosphothreonine mark. Residues Asp199, Trp233, and Ala248 each coordinate S-adenosyl-L-methionine.

The protein belongs to the class I-like SAM-binding methyltransferase superfamily. EEF2KMT family.

Its subcellular location is the cytoplasm. S-adenosyl-L-methionine-dependent protein-lysine N-methyltransferase that mono-, di- and trimethylates elongation factor 2 (EFT1/EFT2) at 'Lys-509'. This Saccharomyces cerevisiae (strain ATCC 204508 / S288c) (Baker's yeast) protein is Protein-lysine N-methyltransferase EFM3.